The primary structure comprises 71 residues: SRY-related protein LG27 (71 aa).

A DNA-binding region (HMG box) is located at residues 1–68 (VKRPMNAFMV…KHMADYPNYK (68 aa)).

Its subcellular location is the nucleus. The polypeptide is SRY-related protein LG27 (Eublepharis macularius (Leopard gecko)).